The following is a 334-amino-acid chain: Holliday junction branch migration complex subunit RuvB (334 aa).

Residues 4–184 are large ATPase domain (RuvB-L); it reads ADRIISASPK…FGIVQRLEFY (181 aa). ATP contacts are provided by residues Ile23, Arg24, Gly65, Lys68, Thr69, Thr70, 131 to 133, Arg174, Tyr184, and Arg221; that span reads EDY. Residue Thr69 participates in Mg(2+) binding. A small ATPAse domain (RuvB-S) region spans residues 185 to 255; that stretch reads SVDDLTSIVK…IAKQALAMLD (71 aa). The interval 258–334 is head domain (RuvB-H); sequence SEGFDFMDIK…YAHLGIAKLD (77 aa). 3 residues coordinate DNA: Arg294, Arg313, and Arg318.

This sequence belongs to the RuvB family. Homohexamer. Forms an RuvA(8)-RuvB(12)-Holliday junction (HJ) complex. HJ DNA is sandwiched between 2 RuvA tetramers; dsDNA enters through RuvA and exits via RuvB. An RuvB hexamer assembles on each DNA strand where it exits the tetramer. Each RuvB hexamer is contacted by two RuvA subunits (via domain III) on 2 adjacent RuvB subunits; this complex drives branch migration. In the full resolvosome a probable DNA-RuvA(4)-RuvB(12)-RuvC(2) complex forms which resolves the HJ.

It localises to the cytoplasm. It catalyses the reaction ATP + H2O = ADP + phosphate + H(+). Its function is as follows. The RuvA-RuvB-RuvC complex processes Holliday junction (HJ) DNA during genetic recombination and DNA repair, while the RuvA-RuvB complex plays an important role in the rescue of blocked DNA replication forks via replication fork reversal (RFR). RuvA specifically binds to HJ cruciform DNA, conferring on it an open structure. The RuvB hexamer acts as an ATP-dependent pump, pulling dsDNA into and through the RuvAB complex. RuvB forms 2 homohexamers on either side of HJ DNA bound by 1 or 2 RuvA tetramers; 4 subunits per hexamer contact DNA at a time. Coordinated motions by a converter formed by DNA-disengaged RuvB subunits stimulates ATP hydrolysis and nucleotide exchange. Immobilization of the converter enables RuvB to convert the ATP-contained energy into a lever motion, pulling 2 nucleotides of DNA out of the RuvA tetramer per ATP hydrolyzed, thus driving DNA branch migration. The RuvB motors rotate together with the DNA substrate, which together with the progressing nucleotide cycle form the mechanistic basis for DNA recombination by continuous HJ branch migration. Branch migration allows RuvC to scan DNA until it finds its consensus sequence, where it cleaves and resolves cruciform DNA. This chain is Holliday junction branch migration complex subunit RuvB, found in Actinobacillus pleuropneumoniae serotype 5b (strain L20).